The chain runs to 330 residues: MKKIAVDAMGGDYAPQAIVEGVNQALSDFSDIEVQLYGDEAKIKQYLTATERVSIIHTDEKIDSDDEPTRAIRNKKNASMVLAAKAVKDGEADAVLSAGNTGALLAAGFFIVGRIKNIDRPGLMSTLPTVDGKGFDMLDLGANAENTAQHLHQYAVLGSFYAKNVRGIAQPRVGLLNNGTESSKGDPLRKETYELLVADESLNFIGNVEARDLMNGVADVVVADGFTGNAVLKSIEGTAMGIMGLLKTAITGGGLRAKLGALLLKDSLRGLKKQLNYSDIGGAVLFGVKAPVVKTHGSSDAKAVYSTIRQIRTMLETDVVAQTAREFSGE.

The protein belongs to the PlsX family. Homodimer. Probably interacts with PlsY.

The protein localises to the cytoplasm. The enzyme catalyses a fatty acyl-[ACP] + phosphate = an acyl phosphate + holo-[ACP]. It participates in lipid metabolism; phospholipid metabolism. Functionally, catalyzes the reversible formation of acyl-phosphate (acyl-PO(4)) from acyl-[acyl-carrier-protein] (acyl-ACP). This enzyme utilizes acyl-ACP as fatty acyl donor, but not acyl-CoA. This chain is Phosphate acyltransferase, found in Streptococcus pneumoniae (strain P1031).